The sequence spans 1806 residues: Focadhesin (1806 aa).

Residues 733-760 (ARPIPKQPEVEDEVKQNEEENEEEEDIS) form a disordered region.

It is found in the cell junction. Its subcellular location is the focal adhesion. The protein resides in the cytoplasm. The protein localises to the cytosol. In terms of biological role, required for the maintenance of SKIC2 and SKIC3 proteostatic levels in the liver. May be involved in the regulation of RNA degradation by the exosome complex. The sequence is that of Focadhesin (focad) from Danio rerio (Zebrafish).